Reading from the N-terminus, the 617-residue chain is MKQSKMPIPTLREMPSDAQVISHALMLRAGYVRQVSAGVYSYLPLANRVIEKAKNIMRQEFEKIGAVEMLAPALLSAELWRESGRYETYGEDLYKLKNREKSDFILGPTHEETFTAIVRDSVKSYKQLPLNLYQIQPKYRDEKRPRNGLLRTREFIMKDAYSFHANYDSLDSVYDEYKAAYERIFTRSGLDFKAIIGDGGAMGGKDSQEFMAITSARTDLDRWVVLDKSVASFDEIPAEVQEEIKAELLKWIVSGEDTIAYSSESSYAANLEMATNEYKPSNRVVAEEEVTRVATPDVKSIDEVAAFLNVPEEQTIKTLFYIADGELVAALLVGNDQLNEVKLKNHLGADFFDVASEEEVANVVQAGFGSLGPVGLPENIKIIADRKVQDVRNAVVGANEDDYHLTGVNPGRDFTAEYVDIREVREGEISPDGQGVLNFARGIEIGHIFKLGTRYSASMGADVLDENGRAVPIIMGCYGIGVSRLLSAVMEQHARLFVNKTPKGEYRYAWGINFPKELAPFDVHLITVNVKDEEAQALTEKLEASLMGAGYEVLTDDRNERVGVKFSDSDLIGLPIRITVGKKAADGIVEVKIKATGDTIEVHADNVLETLEILSKK.

It belongs to the class-II aminoacyl-tRNA synthetase family. ProS type 1 subfamily. In terms of assembly, homodimer.

It is found in the cytoplasm. The catalysed reaction is tRNA(Pro) + L-proline + ATP = L-prolyl-tRNA(Pro) + AMP + diphosphate. Functionally, catalyzes the attachment of proline to tRNA(Pro) in a two-step reaction: proline is first activated by ATP to form Pro-AMP and then transferred to the acceptor end of tRNA(Pro). As ProRS can inadvertently accommodate and process non-cognate amino acids such as alanine and cysteine, to avoid such errors it has two additional distinct editing activities against alanine. One activity is designated as 'pretransfer' editing and involves the tRNA(Pro)-independent hydrolysis of activated Ala-AMP. The other activity is designated 'posttransfer' editing and involves deacylation of mischarged Ala-tRNA(Pro). The misacylated Cys-tRNA(Pro) is not edited by ProRS. In Streptococcus pneumoniae serotype 4 (strain ATCC BAA-334 / TIGR4), this protein is Proline--tRNA ligase.